The primary structure comprises 853 residues: DNA mismatch repair protein MutS (853 aa).

614–621 serves as a coordination point for ATP; sequence GPNMGGKS.

It belongs to the DNA mismatch repair MutS family.

This protein is involved in the repair of mismatches in DNA. It is possible that it carries out the mismatch recognition step. This protein has a weak ATPase activity. This chain is DNA mismatch repair protein MutS, found in Escherichia coli O1:K1 / APEC.